The primary structure comprises 314 residues: Putative integrase/recombinase y4rB (314 aa).

The Core-binding (CB) domain occupies 2–79 (STFRQAVQEY…YVRVFARYRA (78 aa)). The Tyr recombinase domain occupies 100–304 (ARPYLYSKED…SPELMKEAMR (205 aa)). Active-site residues include Arg147, Lys172, His248, Arg251, and His282. Tyr291 serves as the catalytic O-(3'-phospho-DNA)-tyrosine intermediate.

The protein belongs to the 'phage' integrase family.

The protein is Putative integrase/recombinase y4rB of Sinorhizobium fredii (strain NBRC 101917 / NGR234).